A 225-amino-acid polypeptide reads, in one-letter code: Claudin-17 (225 aa).

Residues M1–Q7 lie on the Cytoplasmic side of the membrane. A helical transmembrane segment spans residues I8–P28. Residues Q29–R81 are Extracellular-facing. Residues A82–M102 form a helical membrane-spanning segment. At K103 to V124 the chain is on the cytoplasmic side. Residues L125–I145 form a helical membrane-spanning segment. Residues R146–A164 are Extracellular-facing. The helical transmembrane segment at L165–F185 threads the bilayer. Residues C186 to V225 are Cytoplasmic-facing. A disordered region spans residues R194–V225. The span at T215 to V225 shows a compositional bias: polar residues.

It belongs to the claudin family. As to quaternary structure, does not form homotypic polymeric strands and it is not sufficient to form tight junctions by its own. Interacts with OCLN.

Its subcellular location is the cell junction. It is found in the tight junction. The protein localises to the cell membrane. It carries out the reaction chloride(in) = chloride(out). The enzyme catalyses hydrogencarbonate(in) = hydrogencarbonate(out). It catalyses the reaction bromide(in) = bromide(out). The catalysed reaction is iodide(out) = iodide(in). It carries out the reaction fluoride(in) = fluoride(out). The enzyme catalyses nitrate(in) = nitrate(out). It catalyses the reaction thiocyanate(in) = thiocyanate(out). Channel-forming tight junction protein with selectivity for anions, including chloride and hydrogencarbonate, and for solutes smaller than 9 Angstrom in diameter. In the kidney proximal tubule, may be involved in quantitative reabsorption of filtered anions. Does not affect water permeability. The polypeptide is Claudin-17 (CLDN17) (Sus scrofa (Pig)).